Consider the following 237-residue polypeptide: Large ribosomal subunit protein uL1 (237 aa).

It belongs to the universal ribosomal protein uL1 family. As to quaternary structure, part of the 50S ribosomal subunit.

In terms of biological role, binds directly to 23S rRNA. The L1 stalk is quite mobile in the ribosome, and is involved in E site tRNA release. Protein L1 is also a translational repressor protein, it controls the translation of the L11 operon by binding to its mRNA. The polypeptide is Large ribosomal subunit protein uL1 (Synechococcus elongatus (strain ATCC 33912 / PCC 7942 / FACHB-805) (Anacystis nidulans R2)).